Consider the following 131-residue polypeptide: Phosphoribosyl-AMP cyclohydrolase (131 aa).

Asp-90 provides a ligand contact to Mg(2+). Cys-91 provides a ligand contact to Zn(2+). 2 residues coordinate Mg(2+): Asp-92 and Asp-94. Positions 107 and 114 each coordinate Zn(2+).

Belongs to the PRA-CH family. Homodimer. Mg(2+) serves as cofactor. Requires Zn(2+) as cofactor.

The protein resides in the cytoplasm. The catalysed reaction is 1-(5-phospho-beta-D-ribosyl)-5'-AMP + H2O = 1-(5-phospho-beta-D-ribosyl)-5-[(5-phospho-beta-D-ribosylamino)methylideneamino]imidazole-4-carboxamide. It functions in the pathway amino-acid biosynthesis; L-histidine biosynthesis; L-histidine from 5-phospho-alpha-D-ribose 1-diphosphate: step 3/9. Its function is as follows. Catalyzes the hydrolysis of the adenine ring of phosphoribosyl-AMP. The protein is Phosphoribosyl-AMP cyclohydrolase of Hyphomonas neptunium (strain ATCC 15444).